The primary structure comprises 154 residues: Photosystem II extrinsic protein U, chloroplastic (154 aa).

Residues 1-36 (MAFISTPLGKVTVKSATVSANRRGLRMQSDSEPVVS) constitute a chloroplast transit peptide. The transit peptide at 37–61 (RRALLSGALAAAVAAALARARPAQA) directs the protein to the thylakoid.

It belongs to the PsbU family. PSII is composed of 1 copy each of membrane proteins PsbA, PsbB, PsbC, PsbD, PsbE, PsbF, PsbH, PsbI, PsbJ, PsbK, PsbL, PsbM, PsbT, PsbY, PsbZ, Psb30/Ycf12, at least 3 peripheral proteins of the oxygen-evolving complex and a large number of cofactors. It forms dimeric complexes. The extrinsic subunits in red algae are PsbO (OEC33), PsbQ', cytochrome c-550 and PsbU. Post-translationally, predicted to be translocated into the thylakoid lumen by the Tat system. The position of the first transit peptide cleavage has not been experimentally proven.

The protein localises to the plastid. It localises to the chloroplast thylakoid membrane. In terms of biological role, one of the extrinsic, lumenal subunits of photosystem II (PSII). PSII is a light-driven water plastoquinone oxidoreductase, using light energy to abstract electrons from H(2)O, generating a proton gradient subsequently used for ATP formation. The extrinsic proteins stabilize the structure of photosystem II oxygen-evolving complex (OEC), the ion environment of oxygen evolution and protect the OEC against heat-induced inactivation. The chain is Photosystem II extrinsic protein U, chloroplastic from Cyanidium caldarium (Red alga).